A 296-amino-acid polypeptide reads, in one-letter code: Lipoyl synthase (296 aa).

[4Fe-4S] cluster is bound by residues Cys37, Cys42, Cys48, Cys63, Cys67, Cys70, and Ser276. The Radical SAM core domain maps to 49–265 (WSKKHATMMI…ERVARTKGFL (217 aa)).

The protein belongs to the radical SAM superfamily. Lipoyl synthase family. [4Fe-4S] cluster serves as cofactor.

It is found in the cytoplasm. It carries out the reaction [[Fe-S] cluster scaffold protein carrying a second [4Fe-4S](2+) cluster] + N(6)-octanoyl-L-lysyl-[protein] + 2 oxidized [2Fe-2S]-[ferredoxin] + 2 S-adenosyl-L-methionine + 4 H(+) = [[Fe-S] cluster scaffold protein] + N(6)-[(R)-dihydrolipoyl]-L-lysyl-[protein] + 4 Fe(3+) + 2 hydrogen sulfide + 2 5'-deoxyadenosine + 2 L-methionine + 2 reduced [2Fe-2S]-[ferredoxin]. Its pathway is protein modification; protein lipoylation via endogenous pathway; protein N(6)-(lipoyl)lysine from octanoyl-[acyl-carrier-protein]: step 2/2. Catalyzes the radical-mediated insertion of two sulfur atoms into the C-6 and C-8 positions of the octanoyl moiety bound to the lipoyl domains of lipoate-dependent enzymes, thereby converting the octanoylated domains into lipoylated derivatives. The chain is Lipoyl synthase from Rickettsia canadensis (strain McKiel).